We begin with the raw amino-acid sequence, 533 residues long: Na(+)/H(+) antiporter NhaB (533 aa).

The next 11 helical transmembrane spans lie at 10 to 30, 67 to 87, 96 to 116, 131 to 165, 209 to 229, 247 to 267, 310 to 330, 355 to 375, 396 to 416, 454 to 474, and 481 to 501; these read IGNF…SFLI, PGGL…SQVL, VLLL…LLLF, VSLM…FYSI, LLMH…VGEP, IRMS…CFLV, AFVG…VGLI, EEAL…AVII, LVIF…VFVG, ATPN…APLI, and MVWM…MAIE.

This sequence belongs to the NhaB Na(+)/H(+) (TC 2.A.34) antiporter family.

The protein localises to the cell inner membrane. The enzyme catalyses 2 Na(+)(in) + 3 H(+)(out) = 2 Na(+)(out) + 3 H(+)(in). Na(+)/H(+) antiporter that extrudes sodium in exchange for external protons. This Shewanella sp. (strain MR-4) protein is Na(+)/H(+) antiporter NhaB.